The primary structure comprises 881 residues: Leucine--tRNA ligase (881 aa).

Residues 48–58 (PYPSGKLHMGH) carry the 'HIGH' region motif. The 'KMSKS' region motif lies at 638–642 (KMSKS). Lysine 641 contacts ATP.

Belongs to the class-I aminoacyl-tRNA synthetase family.

The protein resides in the cytoplasm. The catalysed reaction is tRNA(Leu) + L-leucine + ATP = L-leucyl-tRNA(Leu) + AMP + diphosphate. In Janthinobacterium sp. (strain Marseille) (Minibacterium massiliensis), this protein is Leucine--tRNA ligase.